The following is a 231-amino-acid chain: 5'-methylthioadenosine/S-adenosylhomocysteine nucleosidase (231 aa).

E12 functions as the Proton acceptor in the catalytic mechanism. Substrate-binding positions include G78, M153, and 174–175; that span reads ME. The active-site Proton donor is the D198.

It belongs to the PNP/UDP phosphorylase family. MtnN subfamily.

The catalysed reaction is S-adenosyl-L-homocysteine + H2O = S-(5-deoxy-D-ribos-5-yl)-L-homocysteine + adenine. It carries out the reaction S-methyl-5'-thioadenosine + H2O = 5-(methylsulfanyl)-D-ribose + adenine. The enzyme catalyses 5'-deoxyadenosine + H2O = 5-deoxy-D-ribose + adenine. It functions in the pathway amino-acid biosynthesis; L-methionine biosynthesis via salvage pathway; S-methyl-5-thio-alpha-D-ribose 1-phosphate from S-methyl-5'-thioadenosine (hydrolase route): step 1/2. Functionally, catalyzes the irreversible cleavage of the glycosidic bond in both 5'-methylthioadenosine (MTA) and S-adenosylhomocysteine (SAH/AdoHcy) to adenine and the corresponding thioribose, 5'-methylthioribose and S-ribosylhomocysteine, respectively. Also cleaves 5'-deoxyadenosine, a toxic by-product of radical S-adenosylmethionine (SAM) enzymes, into 5-deoxyribose and adenine. The polypeptide is 5'-methylthioadenosine/S-adenosylhomocysteine nucleosidase (Bacillus anthracis (strain A0248)).